The following is a 436-amino-acid chain: MNTKLQDSKSPRLKNRILLTISLLTIVRIGSFIPVPYITKEVLVNLLSAENSSNNTFAQLLNTFSGGGNSSFGLLSLGILPYINASIIIQLLTTIIPALSKMQKDEGEYGRRKLVDFTRYLTFFWAIVESISISYSLREVIFEWNLQVYFLISLSLITGSMIVLWFSELITKNGLGNGSSLLICFNIVSNLPDQIKFSLISLKNQINNFSNIFLLISIFLITTIGCIYINEAIIKIPLVSARQLLKKTKSEEKNSSNSILPLRINQAGVMPLVFTSYAILFFSSLFEIIKKQTNIFNIFFQYPILNSVISYWFLKILFWIFYATLIFFFTYFYSTIVLDPKDVAERFRKNSVVILGISPGSSTRSYLSKILRFIAKINAIFLIYNIIGLQILESILNLNIINIRGLGFTSQLILVNVLIDTIKRIRSFLNEEENYF.

Helical transmembrane passes span 17-37, 72-92, 122-142, 146-166, 209-229, 269-289, 309-329, and 380-400; these read ILLTISLLTIVRIGSFIPVPY, FGLLSLGILPYINASIIIQLL, TFFWAIVESISISYSLREVIF, LQVYFLISLSLITGSMIVLWF, FSNIFLLISIFLITTIGCIYI, VMPLVFTSYAILFFSSLFEII, ISYWFLKILFWIFYATLIFFF, and IFLIYNIIGLQILESILNLNI.

Belongs to the SecY/SEC61-alpha family. As to quaternary structure, component of the plastid Sec protein translocase complex, which is composed of at least SecY and SecE.

It localises to the plastid. It is found in the chloroplast thylakoid membrane. Its function is as follows. The central subunit of the protein translocation channel SecYE. Consists of two halves. These two domains form a lateral gate at the front which open onto the bilayer between TMs 2 and 7, and are clamped together by SecE at the back. The channel is closed by both a pore ring composed of hydrophobic SecY resides and a short helix (helix 2A) on the extracellular side of the membrane which forms a plug. In Vaucheria litorea (Yellow-green alga), this protein is Protein translocase subunit SecY.